A 181-amino-acid polypeptide reads, in one-letter code: Ferredoxin C 2, chloroplastic (181 aa).

A chloroplast-targeting transit peptide spans 1–44; that stretch reads MALILPCTFCTSLQKKNFPINRRYITNFRRGATTATCEFRIPVE. Residues 59–151 enclose the 2Fe-2S ferredoxin-type domain; sequence HKVTVHDRQR…DLEVETQDED (93 aa). Cys-97, Cys-102, Cys-105, and Cys-135 together coordinate [2Fe-2S] cluster.

Belongs to the 2Fe2S plant-type ferredoxin family. The cofactor is [2Fe-2S] cluster.

The protein resides in the plastid. Its subcellular location is the chloroplast. Functionally, ferredoxins are iron-sulfur proteins that transfer electrons in a wide variety of metabolic reactions. Mediates alternative electron partitioning in conditions of acceptor limitation at photosystem I. This Arabidopsis thaliana (Mouse-ear cress) protein is Ferredoxin C 2, chloroplastic.